Consider the following 282-residue polypeptide: Pantothenate synthetase (282 aa).

30-37 lines the ATP pocket; it reads MGFLHDGH. H37 (proton donor) is an active-site residue. Q60 is a binding site for (R)-pantoate. Q60 contributes to the beta-alanine binding site. 146-149 is an ATP binding site; that stretch reads GQKD. Position 152 (Q152) interacts with (R)-pantoate. Residues I175 and 183–186 each bind ATP; that span reads KSSR.

The protein belongs to the pantothenate synthetase family. Homodimer.

The protein localises to the cytoplasm. The enzyme catalyses (R)-pantoate + beta-alanine + ATP = (R)-pantothenate + AMP + diphosphate + H(+). The protein operates within cofactor biosynthesis; (R)-pantothenate biosynthesis; (R)-pantothenate from (R)-pantoate and beta-alanine: step 1/1. Functionally, catalyzes the condensation of pantoate with beta-alanine in an ATP-dependent reaction via a pantoyl-adenylate intermediate. The chain is Pantothenate synthetase from Campylobacter jejuni subsp. jejuni serotype O:23/36 (strain 81-176).